The following is a 386-amino-acid chain: Methylthioribose-1-phosphate isomerase (386 aa).

The active-site Proton donor is aspartate 258.

The protein belongs to the eIF-2B alpha/beta/delta subunits family. MtnA subfamily.

The protein localises to the cytoplasm. It localises to the nucleus. It catalyses the reaction 5-(methylsulfanyl)-alpha-D-ribose 1-phosphate = 5-(methylsulfanyl)-D-ribulose 1-phosphate. It functions in the pathway amino-acid biosynthesis; L-methionine biosynthesis via salvage pathway; L-methionine from S-methyl-5-thio-alpha-D-ribose 1-phosphate: step 1/6. Its function is as follows. Catalyzes the interconversion of methylthioribose-1-phosphate (MTR-1-P) into methylthioribulose-1-phosphate (MTRu-1-P). In Uncinocarpus reesii (strain UAMH 1704), this protein is Methylthioribose-1-phosphate isomerase.